The primary structure comprises 89 residues: Small ribosomal subunit protein bS16 (89 aa).

The protein belongs to the bacterial ribosomal protein bS16 family.

The polypeptide is Small ribosomal subunit protein bS16 (Gloeobacter violaceus (strain ATCC 29082 / PCC 7421)).